The sequence spans 313 residues: Dimethyladenosine transferase (313 aa).

Positions Met-1–Glu-21 are disordered. S-adenosyl-L-methionine-binding residues include His-37, Leu-39, Gly-64, Glu-85, Asp-113, and Asn-128.

This sequence belongs to the class I-like SAM-binding methyltransferase superfamily. rRNA adenine N(6)-methyltransferase family. As to quaternary structure, part of the small subunit (SSU) processome, composed of more than 70 proteins and the RNA chaperone small nucleolar RNA (snoRNA) U3.

The protein resides in the nucleus. The protein localises to the nucleoplasm. It localises to the nucleolus. The enzyme catalyses adenosine(1779)/adenosine(1780) in 18S rRNA + 4 S-adenosyl-L-methionine = N(6)-dimethyladenosine(1779)/N(6)-dimethyladenosine(1780) in 18S rRNA + 4 S-adenosyl-L-homocysteine + 4 H(+). Specifically dimethylates two adjacent adenosines in the loop of a conserved hairpin near the 3'-end of 18S rRNA in the 40S particle. Involved in the pre-rRNA processing steps leading to small-subunit rRNA production independently of its RNA-modifying catalytic activity. Part of the small subunit (SSU) processome, first precursor of the small eukaryotic ribosomal subunit. During the assembly of the SSU processome in the nucleolus, many ribosome biogenesis factors, an RNA chaperone and ribosomal proteins associate with the nascent pre-rRNA and work in concert to generate RNA folding, modifications, rearrangements and cleavage as well as targeted degradation of pre-ribosomal RNA by the RNA exosome. The sequence is that of Dimethyladenosine transferase (DIMT1) from Macaca fascicularis (Crab-eating macaque).